We begin with the raw amino-acid sequence, 338 residues long: Large ribosomal subunit protein uL3 (338 aa).

The interval 230–253 (HRKGHRRTGTIGPQAPALMFTQPR) is disordered.

It belongs to the universal ribosomal protein uL3 family. In terms of assembly, part of the 50S ribosomal subunit. Forms a cluster with proteins L14 and L24e.

In terms of biological role, one of the primary rRNA binding proteins, it binds directly near the 3'-end of the 23S rRNA, where it nucleates assembly of the 50S subunit. This is Large ribosomal subunit protein uL3 from Pyrobaculum neutrophilum (strain DSM 2338 / JCM 9278 / NBRC 100436 / V24Sta) (Thermoproteus neutrophilus).